A 199-amino-acid polypeptide reads, in one-letter code: Small ribosomal subunit protein mS38 (199 aa).

The protein belongs to the mitochondrion-specific ribosomal protein mS38 family. Component of the mitochondrial small ribosomal subunit (mt-SSU). Mature mammalian 55S mitochondrial ribosomes consist of a small (28S) and a large (39S) subunit. The 28S small subunit contains a 12S ribosomal RNA (12S mt-rRNA) and 30 different proteins. The 39S large subunit contains a 16S rRNA (16S mt-rRNA), a copy of mitochondrial valine transfer RNA (mt-tRNA(Val)), which plays an integral structural role, and 52 different proteins. Interacts with Aurora-A. Ubiquitously expressed and especially highly expressed in heart, skeletal muscle and testis.

The protein resides in the mitochondrion matrix. Its subcellular location is the nucleus. In terms of biological role, may act as a negative regulator of Aurora-A kinase, by down-regulation through proteasome-dependent degradation. The sequence is that of Small ribosomal subunit protein mS38 (AURKAIP1) from Homo sapiens (Human).